Consider the following 273-residue polypeptide: Putative phosphoenolpyruvate synthase regulatory protein (273 aa).

153–160 (AVSRAGKT) contributes to the ADP binding site.

Belongs to the pyruvate, phosphate/water dikinase regulatory protein family. PSRP subfamily.

The catalysed reaction is [pyruvate, water dikinase] + ADP = [pyruvate, water dikinase]-phosphate + AMP + H(+). The enzyme catalyses [pyruvate, water dikinase]-phosphate + phosphate + H(+) = [pyruvate, water dikinase] + diphosphate. Bifunctional serine/threonine kinase and phosphorylase involved in the regulation of the phosphoenolpyruvate synthase (PEPS) by catalyzing its phosphorylation/dephosphorylation. In Xanthomonas campestris pv. campestris (strain ATCC 33913 / DSM 3586 / NCPPB 528 / LMG 568 / P 25), this protein is Putative phosphoenolpyruvate synthase regulatory protein.